The primary structure comprises 270 residues: Meiotic recombination 1 protein (270 aa).

The 35-residue stretch at glutamate 191–proline 225 folds into the KH domain.

Required for chromosome pairing and genetic recombination. MER1 may function to bring the axial elements of the synaptonemal complex corresponding to homologous chromosomes together by initiating recombination. MER1 might be responsible for regulating the MER2 gene and/or gene product. This is Meiotic recombination 1 protein (MER1) from Saccharomyces cerevisiae (strain ATCC 204508 / S288c) (Baker's yeast).